Reading from the N-terminus, the 221-residue chain is GTP-binding nuclear protein Ran-2 (221 aa).

The Small GTPase Ran-type domain occupies 10–174 (DYPSFKLVIV…LYLARKLAGD (165 aa)). 21–28 (DGGTGKTT) serves as a coordination point for GTP. The interval 40-48 (KKYEPTIGV) is switch-I. GTP contacts are provided by residues Gly-71, 125 to 128 (NKVD), and 153 to 155 (SAK). A switch-II region spans residues 71–87 (GQEKFGGLRDGYYIHGQ).

It belongs to the small GTPase superfamily. Ran family. Found in a nuclear export complex with RanGTP, exportin and pre-miRNA.

The protein localises to the nucleus. In terms of biological role, GTP-binding protein involved in nucleocytoplasmic transport. Required for the import of protein into the nucleus and also for RNA export. Involved in chromatin condensation and control of cell cycle. This is GTP-binding nuclear protein Ran-2 (RAN2) from Oryza sativa subsp. indica (Rice).